The chain runs to 342 residues: Isopentenyl-diphosphate delta-isomerase (342 aa).

11–12 (RK) contributes to the substrate binding site. FMN is bound by residues serine 68, 69–71 (SMT), serine 99, and asparagine 127. 99 to 101 (SMR) is a binding site for substrate. Residue glutamine 162 coordinates substrate. Mg(2+) is bound at residue glutamate 163. FMN-binding positions include lysine 194, threonine 224, 274 to 276 (GLK), and 295 to 296 (AG).

The protein belongs to the IPP isomerase type 2 family. As to quaternary structure, homooctamer. Dimer of tetramers. FMN serves as cofactor. The cofactor is NADPH. Mg(2+) is required as a cofactor.

It is found in the cytoplasm. The catalysed reaction is isopentenyl diphosphate = dimethylallyl diphosphate. Functionally, involved in the biosynthesis of isoprenoids. Catalyzes the 1,3-allylic rearrangement of the homoallylic substrate isopentenyl (IPP) to its allylic isomer, dimethylallyl diphosphate (DMAPP). In Rickettsia africae (strain ESF-5), this protein is Isopentenyl-diphosphate delta-isomerase.